The primary structure comprises 90 residues: UPF0335 protein RPA4190 (90 aa).

It belongs to the UPF0335 family.

The sequence is that of UPF0335 protein RPA4190 from Rhodopseudomonas palustris (strain ATCC BAA-98 / CGA009).